The chain runs to 533 residues: Conglutin beta 2 (533 aa).

The N-terminal stretch at 1 to 30 (MGKMRVRFPTLVLVLGIVFLMAVSIGIAYG) is a signal peptide. A propeptide spanning residues 31-108 (EKDVLKSHER…EQQQGSPSYS (78 aa)) is cleaved from the precursor. Basic and acidic residues-rich tracts occupy residues 37 to 51 (SHER…EWQP) and 79 to 99 (SGYE…REQE). Disordered stretches follow at residues 37–123 (SHER…QRFQ) and 315–337 (KHAQ…LRSN). Cupin type-1 domains follow at residues 115 to 273 (YHFS…EEIQ) and 332 to 494 (FNLR…EDIE). Asparagine 363 and asparagine 444 each carry an N-linked (GlcNAc...) asparagine glycan. The tract at residues 503–533 (SYFANGQPQQQQQQQSEKEGRRGRRGSSLPF) is disordered.

It belongs to the 7S seed storage protein family. In terms of assembly, multimers. Give rise to a complex array of processed forms, due to a large number of processing sites and changes in glycosylation.

Its function is as follows. Seed storage protein. Accumulates during seed development and is hydrolyzed after germination to provide a carbon and nitrogen source for the developing seedling. In terms of biological role, has a lectin-like activity. This Lupinus albus (White lupine) protein is Conglutin beta 2.